We begin with the raw amino-acid sequence, 328 residues long: tRNA methyltransferase 10 homolog A (328 aa).

2 disordered regions span residues 1–91 (MSSE…RKRV) and 281–328 (HKAC…PVLQ). Ser-22 bears the Phosphoserine mark. Positions 43-83 (RQLKKLMKQKQWEEQREQRKEKRKEKRKRKKLERRQLESNS) form a coiled coil. The segment covering 52 to 62 (KQWEEQREQRK) has biased composition (basic and acidic residues). Over residues 63–75 (EKRKEKRKRKKLE) the composition is skewed to basic residues. Residues 88-278 (RKRVRRDVAR…TILPQRKGAV (191 aa)) enclose the SAM-dependent MTase TRM10-type domain. Over residues 305-319 (ESCRDNPDSPQKDEQ) the composition is skewed to basic and acidic residues.

Belongs to the class IV-like SAM-binding methyltransferase superfamily. TRM10 family. Interacts with tRNA.

Its subcellular location is the nucleus. It is found in the nucleolus. It carries out the reaction guanosine(9) in tRNA + S-adenosyl-L-methionine = N(1)-methylguanosine(9) in tRNA + S-adenosyl-L-homocysteine + H(+). In terms of biological role, S-adenosyl-L-methionine-dependent guanine N(1)-methyltransferase that catalyzes the formation of N(1)-methylguanine at position 9 (m1G9) in tRNAs. Probably not able to catalyze formation of N(1)-methyladenine at position 9 (m1A9) in tRNAs. This Mus musculus (Mouse) protein is tRNA methyltransferase 10 homolog A (Trmt10a).